Consider the following 177-residue polypeptide: Large ribosomal subunit protein uL6 (177 aa).

The protein belongs to the universal ribosomal protein uL6 family. Part of the 50S ribosomal subunit.

In terms of biological role, this protein binds to the 23S rRNA, and is important in its secondary structure. It is located near the subunit interface in the base of the L7/L12 stalk, and near the tRNA binding site of the peptidyltransferase center. The sequence is that of Large ribosomal subunit protein uL6 from Cereibacter sphaeroides (strain ATCC 17025 / ATH 2.4.3) (Rhodobacter sphaeroides).